The sequence spans 311 residues: Solute carrier family 25 member 36 (311 aa).

Solcar repeat units follow at residues Arg4–Lys108, Asp116–Lys203, and Ser224–Leu308. Helical transmembrane passes span Leu7–Leu27, Leu41–Asn57, Gly111–Thr131, Met180–Ile200, Phe226–Pro246, and Gln291–Gly311.

It belongs to the mitochondrial carrier (TC 2.A.29) family.

Its subcellular location is the mitochondrion inner membrane. It catalyses the reaction UTP(in) + CTP(out) = UTP(out) + CTP(in). The catalysed reaction is CTP(out) + UDP(in) = CTP(in) + UDP(out). The enzyme catalyses UMP(in) + CTP(out) = UMP(out) + CTP(in). It carries out the reaction dUTP(in) + CTP(out) = dUTP(out) + CTP(in). It catalyses the reaction dUMP(in) + CTP(out) = dUMP(out) + CTP(in). The catalysed reaction is CDP(in) + CTP(out) = CDP(out) + CTP(in). The enzyme catalyses CTP(out) + CMP(in) = CTP(in) + CMP(out). It carries out the reaction dCTP(in) + CTP(out) = dCTP(out) + CTP(in). It catalyses the reaction dCDP(in) + CTP(out) = dCDP(out) + CTP(in). The catalysed reaction is dCMP(in) + CTP(out) = dCMP(out) + CTP(in). The enzyme catalyses GTP(in) + CTP(out) = GTP(out) + CTP(in). It carries out the reaction CTP(out) + GDP(in) = CTP(in) + GDP(out). It catalyses the reaction GMP(in) + CTP(out) = GMP(out) + CTP(in). The catalysed reaction is dGTP(in) + CTP(out) = dGTP(out) + CTP(in). The enzyme catalyses dGMP(in) + CTP(out) = dGMP(out) + CTP(in). It carries out the reaction ITP(in) + CTP(out) = ITP(out) + CTP(in). It catalyses the reaction IDP(in) + CTP(out) = IDP(out) + CTP(in). The catalysed reaction is IMP(in) + CTP(out) = IMP(out) + CTP(in). The enzyme catalyses CTP(out) = CTP(in). Its function is as follows. Mitochondrial transporter that imports/exports pyrimidine nucleotides into and from mitochondria. Selectively transports cytosine, guanosine, inosine and uridine (deoxy)nucleoside mono-, di-, and triphosphates by antiport mechanism. Catalyzes uniport at much lower rate. May import (deoxy)nucleoside triphosphates in exchange for intramitochondrial (deoxy)nucleoside mono- and diphosphates, thus providing precursors necessary for de novo synthesis of mitochondrial DNA and RNA while exporting products of their catabolism. Participates in mitochondrial genome maintenance, regulation of mitochondrial membrane potential and mitochondrial respiration. In Mus musculus (Mouse), this protein is Solute carrier family 25 member 36 (Slc25a36).